Reading from the N-terminus, the 514-residue chain is Bifunctional purine biosynthesis protein PurH (514 aa).

One can recognise an MGS-like domain in the interval 1 to 145; the sequence is MIKRALISVS…KNYQDVVVIV (145 aa).

It belongs to the PurH family.

It carries out the reaction (6R)-10-formyltetrahydrofolate + 5-amino-1-(5-phospho-beta-D-ribosyl)imidazole-4-carboxamide = 5-formamido-1-(5-phospho-D-ribosyl)imidazole-4-carboxamide + (6S)-5,6,7,8-tetrahydrofolate. It catalyses the reaction IMP + H2O = 5-formamido-1-(5-phospho-D-ribosyl)imidazole-4-carboxamide. It functions in the pathway purine metabolism; IMP biosynthesis via de novo pathway; 5-formamido-1-(5-phospho-D-ribosyl)imidazole-4-carboxamide from 5-amino-1-(5-phospho-D-ribosyl)imidazole-4-carboxamide (10-formyl THF route): step 1/1. The protein operates within purine metabolism; IMP biosynthesis via de novo pathway; IMP from 5-formamido-1-(5-phospho-D-ribosyl)imidazole-4-carboxamide: step 1/1. The polypeptide is Bifunctional purine biosynthesis protein PurH (Acetivibrio thermocellus (strain ATCC 27405 / DSM 1237 / JCM 9322 / NBRC 103400 / NCIMB 10682 / NRRL B-4536 / VPI 7372) (Clostridium thermocellum)).